We begin with the raw amino-acid sequence, 86 residues long: Large ribosomal subunit protein bL31B (86 aa).

Belongs to the bacterial ribosomal protein bL31 family. Type B subfamily. Part of the 50S ribosomal subunit.

The sequence is that of Large ribosomal subunit protein bL31B from Yersinia enterocolitica serotype O:8 / biotype 1B (strain NCTC 13174 / 8081).